The chain runs to 406 residues: Acetate kinase (406 aa).

A Mg(2+)-binding site is contributed by Asn-7. Lys-14 is an ATP binding site. Arg-90 lines the substrate pocket. Asp-147 (proton donor/acceptor) is an active-site residue. Residues 207–211 (HLGNG), 283–285 (DMR), and 331–335 (GVGEN) contribute to the ATP site. Glu-385 lines the Mg(2+) pocket.

The protein belongs to the acetokinase family. In terms of assembly, homodimer. It depends on Mg(2+) as a cofactor. The cofactor is Mn(2+).

The protein resides in the cytoplasm. It catalyses the reaction acetate + ATP = acetyl phosphate + ADP. It functions in the pathway metabolic intermediate biosynthesis; acetyl-CoA biosynthesis; acetyl-CoA from acetate: step 1/2. In terms of biological role, catalyzes the formation of acetyl phosphate from acetate and ATP. Can also catalyze the reverse reaction. This Thermosipho melanesiensis (strain DSM 12029 / CIP 104789 / BI429) protein is Acetate kinase.